Consider the following 492-residue polypeptide: Alpha/beta hydrolase ucsC (492 aa).

The Nucleophile role is filled by S258.

This sequence belongs to the AB hydrolase superfamily. FUS2 hydrolase family. As to quaternary structure, homodimer.

Its pathway is mycotoxin biosynthesis. Functionally, alpha/beta hydrolase; part of the gene cluster that mediates the biosynthesis of UCS1025A, a member of the pyrrolizidinone family that acts as a strong telomerase inhibitor and displays potent antibacterial and antitumor properties. These compounds share a hemiaminal-containing pyrrolizidinone core fused with a gamma-lactone, giving a furopyrrolizidine that is connected to a decalin fragment. The polyketide synthase module (PKS) of the PKS-NRPS ucsA is responsible for the synthesis of the polyketide backbone via the condensation of an acetyl-CoA starter unit with 6 malonyl-CoA units. The downstream nonribosomal peptide synthetase (NRPS) module then amidates the carboxyl end of the polyketide with a 2S,3S-methylproline derived from L-isoleucine by the 2-oxoglutarate-dependent dioxygenase ucsF which converts L-isoleucine to (4S,5S)-4-methylpyrroline-5-carboxylate that is further converted to 2S,3S-methylproline by the pyrroline-5-carboxylate reductase ucsG. Reductive release of the completed aminoacyl polyketide from the assembly line can form the 3-pyrrolin-2-one structure via an intramolecular Knoevenagel reaction. Because ucsA lacks a designated enoylreductase (ER) domain, the required activity is provided the enoyl reductase ucsL. This keto acyclic precursor is the substrate of the Diels-Alderase ucsH, that catalyzes the Diels-Alder cycloaddition. Oxidation of the 3S-methyl group to a carboxylate by the cytochrome P450 monooxygenase ucsK allows an oxa-Michael cyclization that might involve the reductase/dehydrogenase ucsI and which furnishes the furopyrrolizidine. The oxidase ucsJ likely plays a critical role in stereoselective reduction of the C5-C6 double bond to afford the required R-configured carboxylate group. Further enolization and oxidation at C5 by an unidentified enzyme affords the last intermediate that can undergo oxa-Michael cyclization to yield UCS1025A. This Acremonium sp protein is Alpha/beta hydrolase ucsC.